The following is a 304-amino-acid chain: Probable 5-dehydro-4-deoxyglucarate dehydratase (304 aa).

Belongs to the DapA family.

It carries out the reaction 5-dehydro-4-deoxy-D-glucarate + H(+) = 2,5-dioxopentanoate + CO2 + H2O. Its pathway is carbohydrate acid metabolism; D-glucarate degradation; 2,5-dioxopentanoate from D-glucarate: step 2/2. This is Probable 5-dehydro-4-deoxyglucarate dehydratase from Pseudarthrobacter chlorophenolicus (strain ATCC 700700 / DSM 12829 / CIP 107037 / JCM 12360 / KCTC 9906 / NCIMB 13794 / A6) (Arthrobacter chlorophenolicus).